Here is a 146-residue protein sequence, read N- to C-terminus: Holo-[acyl-carrier-protein] synthase (146 aa).

Residues Asp-8 and Glu-61 each contribute to the Mg(2+) site.

This sequence belongs to the P-Pant transferase superfamily. AcpS family. Requires Mg(2+) as cofactor.

It is found in the cytoplasm. It catalyses the reaction apo-[ACP] + CoA = holo-[ACP] + adenosine 3',5'-bisphosphate + H(+). Transfers the 4'-phosphopantetheine moiety from coenzyme A to a Ser of acyl-carrier-protein. The protein is Holo-[acyl-carrier-protein] synthase of Rhodopseudomonas palustris (strain ATCC BAA-98 / CGA009).